We begin with the raw amino-acid sequence, 266 residues long: Sesquipedalian-1 (266 aa).

The PH domain occupies 17-113 (PVDNAGFLYK…WVKALSRASF (97 aa)). Residues 165–184 (QPSVAPQRPPPLPPRRRASA) form a disordered region. S183 carries the post-translational modification Phosphoserine. The F&amp;H signature appears at 191-203 (SFAQLHARYGLEV).

It belongs to the sesquipedalian family. In terms of assembly, forms homodimers and heterodimers with PHETA2. Interacts with OCRL and INPP5B. Interaction with OCRL may be important for endosomal morphology and function.

It localises to the early endosome. Its subcellular location is the recycling endosome. The protein localises to the golgi apparatus. The protein resides in the trans-Golgi network. It is found in the cytoplasmic vesicle. It localises to the clathrin-coated vesicle. Functionally, plays a role in endocytic trafficking. Required for receptor recycling from endosomes, both to the trans-Golgi network and the plasma membrane. The sequence is that of Sesquipedalian-1 from Mus musculus (Mouse).